Here is a 206-residue protein sequence, read N- to C-terminus: Ras-related protein Rab7 (206 aa).

GTP contacts are provided by residues 15–22, 63–67, and 125–128; these read GDSGVGKT, DTAGQ, and NKVD. 2 S-geranylgeranyl cysteine lipidation sites follow: cysteine 205 and cysteine 206.

Belongs to the small GTPase superfamily. Rab family.

The protein localises to the cell membrane. Functionally, protein transport. Probably involved in vesicular traffic. In Cenchrus ciliaris (Buffelgrass), this protein is Ras-related protein Rab7.